The chain runs to 167 residues: SsrA-binding protein (167 aa).

The disordered stretch occupies residues 139–167 (QAHDKRHAEKEREWQRDKQRIMRAHNRNA). Over residues 144–158 (RHAEKEREWQRDKQR) the composition is skewed to basic and acidic residues.

It belongs to the SmpB family.

It localises to the cytoplasm. In terms of biological role, required for rescue of stalled ribosomes mediated by trans-translation. Binds to transfer-messenger RNA (tmRNA), required for stable association of tmRNA with ribosomes. tmRNA and SmpB together mimic tRNA shape, replacing the anticodon stem-loop with SmpB. tmRNA is encoded by the ssrA gene; the 2 termini fold to resemble tRNA(Ala) and it encodes a 'tag peptide', a short internal open reading frame. During trans-translation Ala-aminoacylated tmRNA acts like a tRNA, entering the A-site of stalled ribosomes, displacing the stalled mRNA. The ribosome then switches to translate the ORF on the tmRNA; the nascent peptide is terminated with the 'tag peptide' encoded by the tmRNA and targeted for degradation. The ribosome is freed to recommence translation, which seems to be the essential function of trans-translation. In Xylella fastidiosa (strain M12), this protein is SsrA-binding protein.